Here is a 151-residue protein sequence, read N- to C-terminus: Large ribosomal subunit protein uL13 (151 aa).

This sequence belongs to the universal ribosomal protein uL13 family. In terms of assembly, part of the 50S ribosomal subunit.

Its function is as follows. This protein is one of the early assembly proteins of the 50S ribosomal subunit, although it is not seen to bind rRNA by itself. It is important during the early stages of 50S assembly. The chain is Large ribosomal subunit protein uL13 from Picosynechococcus sp. (strain ATCC 27264 / PCC 7002 / PR-6) (Agmenellum quadruplicatum).